Here is a 73-residue protein sequence, read N- to C-terminus: Large ribosomal subunit protein bL31 (73 aa).

Belongs to the bacterial ribosomal protein bL31 family. Type A subfamily. Part of the 50S ribosomal subunit.

Binds the 23S rRNA. This is Large ribosomal subunit protein bL31 from Rhizobium johnstonii (strain DSM 114642 / LMG 32736 / 3841) (Rhizobium leguminosarum bv. viciae).